The primary structure comprises 371 residues: Protein OSB2, chloroplastic (371 aa).

Residues 1 to 20 (MSLISKSLARIECSPFFYPR) constitute a chloroplast transit peptide. The interval 45-64 (GKTGNGERKQRAKAPAKTPE) is disordered. The SSB domain maps to 97–195 (VANWVNLIGF…VLVQNLNFIQ (99 aa)). 2 PDF region regions span residues 237–289 (WNHL…PKLE) and 312–360 (WKDL…PKLP).

In terms of tissue distribution, expressed in the floral abscission zone.

The protein resides in the plastid. The protein localises to the chloroplast. In terms of biological role, binds preferentially single-stranded DNA. Does not bind to RNA. In Arabidopsis thaliana (Mouse-ear cress), this protein is Protein OSB2, chloroplastic (OSB2).